A 93-amino-acid chain; its full sequence is Leydig cell tumor 10 kDa protein (93 aa).

The tract at residues 1-41 (MAQGQRKFQAQKPKSKAAAAERSRGPRKGGRVIGPKKARVV) is disordered. Low complexity predominate over residues 7–18 (KFQAQKPKSKAA). Residues 25–39 (GPRKGGRVIGPKKAR) are compositionally biased toward basic residues.

Belongs to the UPF0390 family. As to expression, leydig cell tumor, testis and placenta.

Functionally, may have a potential role in hypercalcemia of malignancy. The sequence is that of Leydig cell tumor 10 kDa protein from Rattus norvegicus (Rat).